The sequence spans 542 residues: Protein phosphatase 1G (542 aa).

A lipid anchor (N-myristoyl glycine) is attached at G2. The residue at position 22 (R22) is an Omega-N-methylarginine. One can recognise a PPM-type phosphatase domain in the interval P26–F502. Residues D60 and G61 each coordinate Mn(2+). Disordered regions lie at residues I117–D136 and C164–G325. T122 is subject to Phosphothreonine. Acidic residues-rich tracts occupy residues E123–D136 and D259–M309. K380 is modified (N6-acetyllysine). Mn(2+)-binding residues include D438 and D493. A disordered region spans residues E513–D542. S524 bears the Phosphoserine mark.

The protein belongs to the PP2C family. As to quaternary structure, interacts with NOL3; may dephosphorylate NOL3. Requires Mg(2+) as cofactor. The cofactor is Mn(2+). In terms of tissue distribution, highly expressed in testis. Low level of expression in kidney. Also expressed in a number of tissues undergoing proliferation including embryo, uterus at pregnancy, placenta, and ovaries.

It is found in the nucleus. Its subcellular location is the membrane. The catalysed reaction is O-phospho-L-seryl-[protein] + H2O = L-seryl-[protein] + phosphate. It carries out the reaction O-phospho-L-threonyl-[protein] + H2O = L-threonyl-[protein] + phosphate. In terms of biological role, may be involved in regulation of cell cycle. The sequence is that of Protein phosphatase 1G (Ppm1g) from Mus musculus (Mouse).